Reading from the N-terminus, the 255-residue chain is 3-deoxy-manno-octulosonate cytidylyltransferase (255 aa).

The protein belongs to the KdsB family.

It localises to the cytoplasm. It carries out the reaction 3-deoxy-alpha-D-manno-oct-2-ulosonate + CTP = CMP-3-deoxy-beta-D-manno-octulosonate + diphosphate. The protein operates within nucleotide-sugar biosynthesis; CMP-3-deoxy-D-manno-octulosonate biosynthesis; CMP-3-deoxy-D-manno-octulosonate from 3-deoxy-D-manno-octulosonate and CTP: step 1/1. It functions in the pathway bacterial outer membrane biogenesis; lipopolysaccharide biosynthesis. Functionally, activates KDO (a required 8-carbon sugar) for incorporation into bacterial lipopolysaccharide in Gram-negative bacteria. The polypeptide is 3-deoxy-manno-octulosonate cytidylyltransferase (Psychromonas ingrahamii (strain DSM 17664 / CCUG 51855 / 37)).